A 273-amino-acid polypeptide reads, in one-letter code: 2,3,4,5-tetrahydropyridine-2,6-dicarboxylate N-succinyltransferase (273 aa).

The substrate site is built by Arg-104 and Asp-141.

This sequence belongs to the transferase hexapeptide repeat family. As to quaternary structure, homotrimer.

The protein localises to the cytoplasm. It carries out the reaction (S)-2,3,4,5-tetrahydrodipicolinate + succinyl-CoA + H2O = (S)-2-succinylamino-6-oxoheptanedioate + CoA. It functions in the pathway amino-acid biosynthesis; L-lysine biosynthesis via DAP pathway; LL-2,6-diaminopimelate from (S)-tetrahydrodipicolinate (succinylase route): step 1/3. In Neisseria meningitidis serogroup C (strain 053442), this protein is 2,3,4,5-tetrahydropyridine-2,6-dicarboxylate N-succinyltransferase.